Here is a 346-residue protein sequence, read N- to C-terminus: Flap endonuclease 1 (346 aa).

The N-domain stretch occupies residues 1-102 (MGVTELGKLI…AEIEERRKAK (102 aa)). Residues aspartate 31, aspartate 84, glutamate 156, glutamate 158, aspartate 177, aspartate 179, and aspartate 239 each contribute to the Mg(2+) site. Residues 120–261 (EVAKYAKRAI…RALKLIWEFG (142 aa)) are I-domain.

The protein belongs to the XPG/RAD2 endonuclease family. FEN1 subfamily. In terms of assembly, interacts with PCNA. PCNA stimulates the nuclease activity without altering cleavage specificity. Mg(2+) is required as a cofactor.

Functionally, structure-specific nuclease with 5'-flap endonuclease and 5'-3' exonuclease activities involved in DNA replication and repair. During DNA replication, cleaves the 5'-overhanging flap structure that is generated by displacement synthesis when DNA polymerase encounters the 5'-end of a downstream Okazaki fragment. Binds the unpaired 3'-DNA end and kinks the DNA to facilitate 5' cleavage specificity. Cleaves one nucleotide into the double-stranded DNA from the junction in flap DNA, leaving a nick for ligation. Also involved in the base excision repair (BER) pathway. Acts as a genome stabilization factor that prevents flaps from equilibrating into structures that lead to duplications and deletions. Also possesses 5'-3' exonuclease activity on nicked or gapped double-stranded DNA. The sequence is that of Flap endonuclease 1 from Pyrobaculum arsenaticum (strain DSM 13514 / JCM 11321 / PZ6).